A 110-amino-acid polypeptide reads, in one-letter code: MNYENPPPYASPPAPYPPYGQQQPSYPVPNQYPGNPPGPVGYQPAQPGYQGYPQYGWQGAPPANAPVYMDAPKNTVYVVEERRNDTSGESACLTACWTALCCCCLWDMLT.

Positions 1–18 (MNYENPPPYASPPAPYPP) are enriched in pro residues. Residues 1–45 (MNYENPPPYASPPAPYPPYGQQQPSYPVPNQYPGNPPGPVGYQPA) are disordered. A compositionally biased stretch (low complexity) spans 19–29 (YGQQQPSYPVP). Residues 87–104 (SGESACLTACWTALCCCC) form a helical membrane-spanning segment.

The protein belongs to the CYSTM1 family.

The protein localises to the membrane. This chain is Cysteine-rich and transmembrane domain-containing protein 1 (cystm1), found in Xenopus tropicalis (Western clawed frog).